The following is an 810-amino-acid chain: Plasminogen (810 aa).

Residues 1–19 (MEHKEVVLLLLLFLKSGQG) form the signal peptide. Positions 20–98 (EPLDDYVNTQ…RDVVLFEKKV (79 aa)) constitute a PAN domain. 12 disulfide bridges follow: cysteine 49–cysteine 73, cysteine 53–cysteine 61, cysteine 103–cysteine 181, cysteine 124–cysteine 164, cysteine 152–cysteine 176, cysteine 185–cysteine 262, cysteine 188–cysteine 316, cysteine 206–cysteine 245, cysteine 234–cysteine 257, cysteine 275–cysteine 352, cysteine 296–cysteine 335, and cysteine 324–cysteine 347. Kringle domains follow at residues 103 to 181 (CKTG…ILEC) and 184 to 262 (ECMH…IPRC). The disordered stretch occupies residues 126–145 (KWSSTSPHRPRFSPATHPSE). Arginine 136, aspartate 158, and arginine 172 together coordinate L-lysine. The O-linked (GalNAc...) serine glycan is linked to serine 268. Residues 275 to 352 (CLKGTGENYR…RWEYCKIPSC (78 aa)) form the Kringle 3 domain. Asparagine 308 carries N-linked (GlcNAc...) asparagine glycosylation. O-linked (GalNAc...) threonine glycosylation is present at threonine 365. Cystine bridges form between cysteine 377–cysteine 454, cysteine 398–cysteine 437, cysteine 426–cysteine 449, cysteine 481–cysteine 560, cysteine 502–cysteine 543, cysteine 531–cysteine 555, cysteine 567–cysteine 685, cysteine 577–cysteine 585, and cysteine 607–cysteine 623. Kringle domains follow at residues 377–454 (CYHG…LKKC) and 481–560 (CMFG…VPQC). The tract at residues 396 to 416 (KKCQSWSSMTPHRHQKTPENY) is disordered. The L-lysine site is built by aspartate 432 and arginine 445. The Peptidase S1 domain occupies 581 to 808 (VVGGCVAHPH…FVTWIEGVMR (228 aa)). Serine 597 carries the phosphoserine modification. Active-site charge relay system residues include histidine 622 and aspartate 665. A Phosphoserine modification is found at serine 688. Disulfide bonds link cysteine 699-cysteine 766, cysteine 729-cysteine 745, and cysteine 756-cysteine 784. Serine 760 functions as the Charge relay system in the catalytic mechanism.

It belongs to the peptidase S1 family. Plasminogen subfamily. In terms of assembly, interacts (both mature PLG and the angiostatin peptide) with CSPG4 and AMOT. Interacts (via the Kringle domains) with HRG; the interaction tethers PLG to the cell surface and enhances its activation. Interacts (via Kringle 4 domain) with ADA; the interaction stimulates PLG activation when in complex with DPP4. Angiostatin: Interacts with ATP5F1A; the interaction inhibits most of the angiogenic effects of angiostatin. Interacts (plasmin) with iripin-8, a serine protease inhibitor from Ixodes ricinus saliva. Interacts (plasmin) with iripin-1, a serine protease inhibitor from Ixodes ricinus saliva. Interacts (plasmin) with Kazal-type trypsin inhibitor, a serine protease inhibitor from Aedes aegypti. (Microbial infection) Interacts with C.albicans GPD2; the interaction is direct and provides active plasmin on the surface of fungal cells. As to quaternary structure, (Microbial infection) Interacts with Staphylococcus aureus protein FnbB; this interaction provides active plasmin on the surface of bacterial cells. In terms of assembly, (Microbial infection) Interacts with P.falciparum (strain NF54) enolase ENO (via DKSLVK motif); the interaction occurs at the ookinete cell surface and is required for ookinete invasion of the mosquito midgut. (Microbial infection) Interacts with B.burgdorferi OspC. Post-translationally, N-linked glycan contains N-acetyllactosamine and sialic acid. O-linked glycans consist of Gal-GalNAc disaccharide modified with up to 2 sialic acid residues (microheterogeneity). In the presence of the inhibitor, the activation involves only cleavage after Arg-580, yielding two chains held together by two disulfide bonds. In the absence of the inhibitor, the activation involves additionally the removal of the activation peptide. In terms of processing, (Microbial infection) The Y.pestis Pla protein cleaves between Arg-580 and Val-581, generating plasmin which facilitates bacterial migration and infection. Present in plasma and many other extracellular fluids. It is synthesized in the liver.

The protein localises to the secreted. It carries out the reaction Preferential cleavage: Lys-|-Xaa &gt; Arg-|-Xaa, higher selectivity than trypsin. Converts fibrin into soluble products.. Converted into plasmin by plasminogen activators, both plasminogen and its activator being bound to fibrin. Activated with catalytic amounts of streptokinase. Plasmin activity inhibited by SERPINE2. In terms of biological role, plasmin dissolves the fibrin of blood clots and acts as a proteolytic factor in a variety of other processes including embryonic development, tissue remodeling, tumor invasion, and inflammation. In ovulation, weakens the walls of the Graafian follicle. It activates the urokinase-type plasminogen activator, collagenases and several complement zymogens, such as C1, C4 and C5. Cleavage of fibronectin and laminin leads to cell detachment and apoptosis. Also cleaves fibrin, thrombospondin and von Willebrand factor. Its role in tissue remodeling and tumor invasion may be modulated by CSPG4. Binds to cells. Its function is as follows. Angiostatin is an angiogenesis inhibitor that blocks neovascularization and growth of experimental primary and metastatic tumors in vivo. (Microbial infection) ENO/enoloase from parasite P.falciparum (strain NF54) interacts with PLG present in the mosquito blood meal to promote the invasion of the mosquito midgut by the parasite ookinete. The catalytic active form, plasmin, is essential for the invasion of the mosquito midgut. Functionally, (Microbial infection) Binds to OspC on the surface of B.burgdorferi cells, possibly conferring an extracellular protease activity on the bacteria that allows it to traverse host tissue. In terms of biological role, (Microbial infection) Interacts with dengue virus type 2 particles. Enhances dengue virus type 2 infection in Aedes aegypti mosquito midgut by increasing midgut internalization, resulting in higher infection rates and viral dissemination in mosquitoes. This is Plasminogen (PLG) from Homo sapiens (Human).